The chain runs to 411 residues: Peptidase T (411 aa).

A Zn(2+)-binding site is contributed by histidine 79. The active site involves aspartate 81. Aspartate 142 contributes to the Zn(2+) binding site. Glutamate 176 serves as the catalytic Proton acceptor. 3 residues coordinate Zn(2+): glutamate 177, aspartate 199, and histidine 381.

The protein belongs to the peptidase M20B family. Zn(2+) is required as a cofactor.

It is found in the cytoplasm. The enzyme catalyses Release of the N-terminal residue from a tripeptide.. In terms of biological role, cleaves the N-terminal amino acid of tripeptides. The chain is Peptidase T from Exiguobacterium sibiricum (strain DSM 17290 / CCUG 55495 / CIP 109462 / JCM 13490 / 255-15).